A 277-amino-acid chain; its full sequence is MSLPEHSPLGKPSAYKTEYDASLLFPIPRQPKRTEIGLPEGKPVPFFGVDIWNAYELSWLNLKGKPQVALATFIIPSDTPNIVESKSFKLYLNSFNQTRIASPEALQQLLHHDLSEATGGTVQVRLVTEADLGKQQMGELDGLLLDRLDIEVDRYEPAPELLFADQDETPVEETLVSHLLKSNCLVTGQPDWGSVQIRYVGAPINQEALLKYLISFRNHNEFHEQCVERIFMDVMRQCKPVKLAVYARYTRRGGLDINPFRTNFNTAWPDNKRNARQ.

83 to 85 contributes to the substrate binding site; that stretch reads VES. Position 85–86 (85–86) interacts with NADPH; that stretch reads SK. Cysteine 184 serves as the catalytic Thioimide intermediate. Residue aspartate 191 is the Proton donor of the active site. 223–224 provides a ligand contact to substrate; it reads HE. Position 252–253 (252–253) interacts with NADPH; the sequence is RG.

It belongs to the GTP cyclohydrolase I family. QueF type 2 subfamily. As to quaternary structure, homodimer.

Its subcellular location is the cytoplasm. The catalysed reaction is 7-aminomethyl-7-carbaguanine + 2 NADP(+) = 7-cyano-7-deazaguanine + 2 NADPH + 3 H(+). Its pathway is tRNA modification; tRNA-queuosine biosynthesis. In terms of biological role, catalyzes the NADPH-dependent reduction of 7-cyano-7-deazaguanine (preQ0) to 7-aminomethyl-7-deazaguanine (preQ1). The protein is NADPH-dependent 7-cyano-7-deazaguanine reductase of Cupriavidus taiwanensis (strain DSM 17343 / BCRC 17206 / CCUG 44338 / CIP 107171 / LMG 19424 / R1) (Ralstonia taiwanensis (strain LMG 19424)).